A 482-amino-acid chain; its full sequence is 2-succinylbenzoate--CoA ligase (482 aa).

This sequence belongs to the ATP-dependent AMP-binding enzyme family. MenE subfamily.

It carries out the reaction 2-succinylbenzoate + ATP + CoA = 2-succinylbenzoyl-CoA + AMP + diphosphate. Its pathway is quinol/quinone metabolism; 1,4-dihydroxy-2-naphthoate biosynthesis; 1,4-dihydroxy-2-naphthoate from chorismate: step 5/7. It functions in the pathway quinol/quinone metabolism; menaquinone biosynthesis. Converts 2-succinylbenzoate (OSB) to 2-succinylbenzoyl-CoA (OSB-CoA). The chain is 2-succinylbenzoate--CoA ligase from Bacillus cereus (strain ZK / E33L).